We begin with the raw amino-acid sequence, 210 residues long: uncharacterized protein (210 aa).

To E.coli YkgK.

This is an uncharacterized protein from Escherichia coli (strain K12).